The following is a 397-amino-acid chain: Elongation factor Tu (397 aa).

Residues 10 to 207 enclose the tr-type G domain; sequence LPHVNVGTIG…TLDSYIPEPV (198 aa). The interval 19-26 is G1; sequence GHVDHGKT. A GTP-binding site is contributed by 19–26; the sequence is GHVDHGKT. T26 lines the Mg(2+) pocket. Positions 60 to 64 are G2; sequence GITIN. The G3 stretch occupies residues 81–84; it reads DCPG. GTP is bound by residues 81–85 and 136–139; these read DCPGH and NKAD. The segment at 136–139 is G4; the sequence is NKAD. The G5 stretch occupies residues 174-176; that stretch reads SAR.

It belongs to the TRAFAC class translation factor GTPase superfamily. Classic translation factor GTPase family. EF-Tu/EF-1A subfamily. Monomer.

The protein resides in the cytoplasm. It carries out the reaction GTP + H2O = GDP + phosphate + H(+). Functionally, GTP hydrolase that promotes the GTP-dependent binding of aminoacyl-tRNA to the A-site of ribosomes during protein biosynthesis. The protein is Elongation factor Tu of Pseudomonas putida (strain ATCC 700007 / DSM 6899 / JCM 31910 / BCRC 17059 / LMG 24140 / F1).